The following is a 362-amino-acid chain: Glutaminase-asparaginase (362 aa).

The signal sequence occupies residues 1–25 (MKSALKTFVPGALALLLLFPVAAQA). Positions 35-362 (ANVVILATGG…KELQRMFWEY (328 aa)) constitute an Asparaginase/glutaminase domain. T45 functions as the Acyl-ester intermediate in the catalytic mechanism. Substrate contacts are provided by residues S92 and 125-126 (TD).

Belongs to the asparaginase 1 family. Homotetramer.

The protein localises to the periplasm. It carries out the reaction L-glutamine + H2O = L-glutamate + NH4(+). The enzyme catalyses L-asparagine + H2O = L-aspartate + NH4(+). This is Glutaminase-asparaginase from Pseudomonas fluorescens biotype A.